Reading from the N-terminus, the 342-residue chain is Lipase B (342 aa).

The signal sequence occupies residues 1 to 18 (MKLLSLTGVAGVLATCVA). Positions 19-25 (ATPLVKR) are excised as a propeptide. A disulfide bridge connects residues Cys-47 and Cys-89. An N-linked (GlcNAc...) asparagine glycan is attached at Asn-99. Active-site residues include Ser-130, Asp-212, and His-249. Cystine bridges form between Cys-241–Cys-283 and Cys-318–Cys-336.

It catalyses the reaction a triacylglycerol + H2O = a diacylglycerol + a fatty acid + H(+). Functionally, hydrolysis of triglycerides. Is very stereospecific both in hydrolysis and in organic synthesis and has a potentially important application in glucolipid synthesis. The chain is Lipase B from Pseudozyma antarctica (Yeast).